The chain runs to 121 residues: General odorant-binding protein 72 (121 aa).

Disulfide bonds link C45–C101 and C90–C110.

It belongs to the PBP/GOBP family.

Its subcellular location is the secreted. Its function is as follows. Present in the aqueous fluid surrounding olfactory sensory dendrites and are thought to aid in the capture and transport of hydrophobic odorants into and through this fluid. This Anopheles gambiae (African malaria mosquito) protein is General odorant-binding protein 72 (Obp72).